We begin with the raw amino-acid sequence, 320 residues long: Tetraspanin-32 (320 aa).

4 helical membrane-spanning segments follow: residues 14 to 34 (MLVT…MVTL), 60 to 80 (WAFS…VLSA), 90 to 110 (LMAG…QVVF), and 203 to 223 (SIGL…WFAI).

This sequence belongs to the tetraspanin (TM4SF) family. As to expression, expressed ubiquitously at low levels. High levels of expression are confined to hematopoietic tissues including peripheral blood leukocytes, thymus and spleen.

The protein resides in the membrane. The sequence is that of Tetraspanin-32 (TSPAN32) from Homo sapiens (Human).